A 666-amino-acid chain; its full sequence is Zinc finger MYM-type protein 5 (666 aa).

Residues Lys-85, Lys-88, Lys-146, and Lys-163 each participate in a glycyl lysine isopeptide (Lys-Gly) (interchain with G-Cter in SUMO2) cross-link. A disordered region spans residues 87-106 (EKPQGNYSVIPPPSRDLASQ). The disordered stretch occupies residues 191–212 (SPDSWISQSASFPRNQKQPGVD). The span at 194 to 208 (SWISQSASFPRNQKQ) shows a compositional bias: polar residues. A Glycyl lysine isopeptide (Lys-Gly) (interchain with G-Cter in SUMO2) cross-link involves residue Lys-222. 4 consecutive MYM-type zinc fingers follow at residues 262 to 296 (HLFCCTTCLSSFSHKRTQNTRSVICKKFASTKKAD), 308 to 348 (QEFC…RHEV), 355 to 390 (HKLCSNHCFNKYRLANGLIMNCCEHCGEYMPSKSTG), and 401 to 428 (KRFCCQSCINEYKQMMETKSKKLTASEN). Glycyl lysine isopeptide (Lys-Gly) (interchain with G-Cter in SUMO2) cross-links involve residues Lys-440, Lys-452, Lys-459, and Lys-549.

As to quaternary structure, interacts (via N-terminal 120 amino acid region) with ETV5 (via C-terminal).

It localises to the nucleus. In terms of biological role, functions as a transcriptional regulator. This Macaca fascicularis (Crab-eating macaque) protein is Zinc finger MYM-type protein 5 (ZMYM5).